We begin with the raw amino-acid sequence, 344 residues long: L-threonine 3-dehydrogenase (344 aa).

Cys-42 lines the Zn(2+) pocket. Active-site charge relay system residues include Thr-44 and His-47. His-67, Glu-68, Cys-97, Cys-100, Cys-103, and Cys-111 together coordinate Zn(2+). NAD(+) is bound by residues Ile-179, Asp-199, Arg-204, 266–268 (LGI), and 290–291 (IY).

The protein belongs to the zinc-containing alcohol dehydrogenase family. As to quaternary structure, homotetramer. It depends on Zn(2+) as a cofactor.

The protein resides in the cytoplasm. The catalysed reaction is L-threonine + NAD(+) = (2S)-2-amino-3-oxobutanoate + NADH + H(+). The protein operates within amino-acid degradation; L-threonine degradation via oxydo-reductase pathway; glycine from L-threonine: step 1/2. In terms of biological role, catalyzes the NAD(+)-dependent oxidation of L-threonine to 2-amino-3-ketobutyrate. In Mesorhizobium japonicum (strain LMG 29417 / CECT 9101 / MAFF 303099) (Mesorhizobium loti (strain MAFF 303099)), this protein is L-threonine 3-dehydrogenase.